A 293-amino-acid chain; its full sequence is Tumor necrosis factor receptor superfamily member 13B (293 aa).

Over 1-165 (MSGLGRSRRG…SADQVALVYS (165 aa)) the chain is Extracellular. TNFR-Cys repeat units lie at residues 33–67 (SCPEEQYWDPLLGTCMSCKTICNHQSQRTCAAFCR) and 70–104 (SCRKEQGKFYDHLLRDCISCASICGQHPKQCAYFC). 6 cysteine pairs are disulfide-bonded: C34–C47, C50–C62, C54–C66, C71–C86, C89–C100, and C93–C104. Residues 115–146 (PPELRRQRSGEVENNSDNSGRYQGLEHRGSEA) are disordered. The span at 126-135 (VENNSDNSGR) shows a compositional bias: polar residues. A glycan (N-linked (GlcNAc...) asparagine) is linked at N128. The helical; Signal-anchor for type III membrane protein transmembrane segment at 166-186 (TLGLCLCAVLCCFLVAVACFL) threads the bilayer. The Cytoplasmic portion of the chain corresponds to 187 to 293 (KKRGDPCSCQ…VPAQEGGPGA (107 aa)). A disordered region spans residues 192–226 (PCSCQPRSRPRQSPAKSSQDHAMEAGSPVSTSPEP).

Binds TRAF2, TRAF5 and TRAF6. Binds the NH2-terminal domain of CAMLG with its C-terminus. As to expression, highly expressed in spleen, thymus, small intestine and peripheral blood leukocytes. Expressed in resting B-cells and activated T-cells, but not in resting T-cells.

It localises to the membrane. In terms of biological role, receptor for TNFSF13/APRIL and TNFSF13B/TALL1/BAFF/BLYS that binds both ligands with similar high affinity. Mediates calcineurin-dependent activation of NF-AT, as well as activation of NF-kappa-B and AP-1. Involved in the stimulation of B- and T-cell function and the regulation of humoral immunity. The chain is Tumor necrosis factor receptor superfamily member 13B (TNFRSF13B) from Homo sapiens (Human).